We begin with the raw amino-acid sequence, 127 residues long: Large ribosomal subunit protein bL17 (127 aa).

Belongs to the bacterial ribosomal protein bL17 family. In terms of assembly, part of the 50S ribosomal subunit. Contacts protein L32.

The chain is Large ribosomal subunit protein bL17 from Escherichia fergusonii (strain ATCC 35469 / DSM 13698 / CCUG 18766 / IAM 14443 / JCM 21226 / LMG 7866 / NBRC 102419 / NCTC 12128 / CDC 0568-73).